A 331-amino-acid chain; its full sequence is DNA-directed RNA polymerase subunit alpha (331 aa).

The alpha N-terminal domain (alpha-NTD) stretch occupies residues 1 to 226 (MLIAQRPTLT…ELFGLCRELN (226 aa)). Residues 243 to 331 (TNPEMAVPIE…GGTFFSPEDE (89 aa)) form an alpha C-terminal domain (alpha-CTD) region.

The protein belongs to the RNA polymerase alpha chain family. Homodimer. The RNAP catalytic core consists of 2 alpha, 1 beta, 1 beta' and 1 omega subunit. When a sigma factor is associated with the core the holoenzyme is formed, which can initiate transcription.

It carries out the reaction RNA(n) + a ribonucleoside 5'-triphosphate = RNA(n+1) + diphosphate. DNA-dependent RNA polymerase catalyzes the transcription of DNA into RNA using the four ribonucleoside triphosphates as substrates. The chain is DNA-directed RNA polymerase subunit alpha from Bifidobacterium longum (strain NCC 2705).